The sequence spans 193 residues: Protein PapJ (193 aa).

The signal sequence occupies residues 1–27 (MVVNKTTAVLYLIALSLSGFIHTFLRA).

The protein resides in the periplasm. In terms of biological role, this protein maintains pilus integrity and thus is an important participant in pilus assembly. It may function as molecular chaperone directly or indirectly in the correct assembly of PapA subunits. This Escherichia coli protein is Protein PapJ (papJ).